The following is a 297-amino-acid chain: Aspartate carbamoyltransferase catalytic subunit (297 aa).

Carbamoyl phosphate-binding residues include R49 and T50. K77 provides a ligand contact to L-aspartate. The carbamoyl phosphate site is built by R99, H129, and Q132. L-aspartate contacts are provided by R162 and R215. Residues G256 and P257 each coordinate carbamoyl phosphate.

The protein belongs to the aspartate/ornithine carbamoyltransferase superfamily. ATCase family. In terms of assembly, heterododecamer (2C3:3R2) of six catalytic PyrB chains organized as two trimers (C3), and six regulatory PyrI chains organized as three dimers (R2).

The enzyme catalyses carbamoyl phosphate + L-aspartate = N-carbamoyl-L-aspartate + phosphate + H(+). It functions in the pathway pyrimidine metabolism; UMP biosynthesis via de novo pathway; (S)-dihydroorotate from bicarbonate: step 2/3. In terms of biological role, catalyzes the condensation of carbamoyl phosphate and aspartate to form carbamoyl aspartate and inorganic phosphate, the committed step in the de novo pyrimidine nucleotide biosynthesis pathway. In Legionella pneumophila (strain Paris), this protein is Aspartate carbamoyltransferase catalytic subunit.